The primary structure comprises 454 residues: DNA-binding protein BIN4 (454 aa).

Disordered regions lie at residues 24 to 53 (LLSL…DDGD), 103 to 249 (AGKE…DKDT), and 380 to 454 (TFES…KAKK). Residues 112–123 (DCEKLSSKHKDA) are compositionally biased toward basic and acidic residues. The segment covering 132-150 (LVSSDSEPSSPIKQEVTVS) has biased composition (polar residues). Basic and acidic residues predominate over residues 229 to 249 (TPKEENCAQEILKTEDKDKDT). A compositionally biased stretch (basic residues) spans 438–454 (PAKKARNSAPKKPKAKK).

Interacts with TOP6A, RHL1 and itself, but not with TOP6B. As to expression, expressed in expanding cotyledons, vascular cells, elongating root cells, developing leaf trichomes, root and apical meristems and lateral root primordia.

Its subcellular location is the nucleus. Functionally, component of the DNA topoisomerase VI complex. Binds to DNA. Required for chromatin organization and progression of endoreduplication cycles. The loss of BIN4 activates the ATM- and ATR-dependent DNA damage responses in postmitotic cells and induces the ectopic expression of the mitotic G2/M-specific cyclin B1;1 gene in non-dividing cells. This is DNA-binding protein BIN4 (BIN4) from Arabidopsis thaliana (Mouse-ear cress).